We begin with the raw amino-acid sequence, 519 residues long: MDKFRRNGKEDTFRQRRFLYPLLFQENLYAIAYDHYLSRSSSFESMENSSYNDRFSFLTVKRLISRIRQQNGSIVSFGNYNQNKNKLVGHNRNFYSELVLEGLTVVLEVTFSIQSKHYLEGMNEWNSFRSIHSIFPFMEDKIPHSNFLLDIRIPHSTHPEILVRTFRYWIQDAPSLHSLRSVLHEHRNLILSENLDQLILIASKEKTRLSLFLWNYYVYECESLLVPLWKRFSYSRSLSYGAFLERTTFYRKIEHIVIFSHKSIKDLKKRIWFLKDPSIHYVKDRERFLIALRGTYLLVKKWRYHLTNFWQCHFHLRSQPYRISIDELSKNCFSFLGYLFSVQMKTFVVKIKMLDDSFITDPITKEFDPIAPTTLLIGYLAKERFCDISGRPTGRLAWTGLTDDNILHRFDRIWRNILHYYSGSSKKDGLYRMKYILRLPCAKTLACKHKSAIRVVRERFGSELFTKSSPKERELISLSFSKTRSQRERIWHSDILQRNPFCNSWRNKQNLQVETPFDR.

This sequence belongs to the intron maturase 2 family. MatK subfamily.

The protein localises to the plastid. It is found in the chloroplast. Its function is as follows. Usually encoded in the trnK tRNA gene intron. Probably assists in splicing its own and other chloroplast group II introns. The sequence is that of Maturase K from Cycas panzhihuaensis (Dukou cycad).